Reading from the N-terminus, the 233-residue chain is EEF1A lysine methyltransferase 2 (233 aa).

It belongs to the class I-like SAM-binding methyltransferase superfamily. EFM4 family.

The protein resides in the cytoplasm. It is found in the nucleus. It carries out the reaction L-lysyl-[protein] + 3 S-adenosyl-L-methionine = N(6),N(6),N(6)-trimethyl-L-lysyl-[protein] + 3 S-adenosyl-L-homocysteine + 3 H(+). Its function is as follows. Protein-lysine methyltransferase that selectively catalyzes the trimethylation of EEF1A at 'Lys-318'. The protein is EEF1A lysine methyltransferase 2 of Danio rerio (Zebrafish).